Consider the following 350-residue polypeptide: MSREANPFKKMPTILMPDELMAKALRRGEKVANEMRQKELPWLLKARFVEEHKVRTIASVVADNLQKVIDKTPPVRKLPKFYQEMVEVLVGIDDFKKSMGAFKWASELVRKLGNEYARKIRKARTPQQAGKLRKEFVGRVKSILEQIHPEMAFVAVAREKLKDLPTFKDLPTVVIAGYPNVGKSTLLKKLTGADVEINSYPFTTKGINVGYIGEIQMVDTPGLLDRPLYERNDIELQAILALNYLANLILFIIDASEFCGYTIEEQINLLKEIKDLFKAPIVVAINKIDLVDEERVKEIEEKLKEVGIEEILKISADKDIGLDELKERLKKIAIKEFLKDKDAENKELEC.

In terms of domain architecture, OBG-type G spans 171–334 (PTVVIAGYPN…LKERLKKIAI (164 aa)). Residues 177 to 184 (GYPNVGKS), 219 to 223 (DTPGL), and 286 to 289 (NKID) contribute to the GTP site.

It belongs to the TRAFAC class OBG-HflX-like GTPase superfamily. OBG GTPase family. NOG subfamily.

This is an uncharacterized protein from Methanocaldococcus jannaschii (strain ATCC 43067 / DSM 2661 / JAL-1 / JCM 10045 / NBRC 100440) (Methanococcus jannaschii).